The following is a 79-amino-acid chain: Sec-independent protein translocase protein TatA (79 aa).

Residues 1–21 traverse the membrane as a helical segment; the sequence is MGGFTSIWHWVIVLLVIVLLF. The segment at 48–79 is disordered; it reads EEEAKNEPKTLDAQATQTKAHESSEIKSKQES. Basic and acidic residues predominate over residues 66 to 79; sequence KAHESSEIKSKQES.

This sequence belongs to the TatA/E family. As to quaternary structure, the Tat system comprises two distinct complexes: a TatABC complex, containing multiple copies of TatA, TatB and TatC subunits, and a separate TatA complex, containing only TatA subunits. Substrates initially bind to the TatABC complex, which probably triggers association of the separate TatA complex to form the active translocon.

Its subcellular location is the cell inner membrane. Part of the twin-arginine translocation (Tat) system that transports large folded proteins containing a characteristic twin-arginine motif in their signal peptide across membranes. TatA could form the protein-conducting channel of the Tat system. The chain is Sec-independent protein translocase protein TatA from Helicobacter pylori (strain P12).